The primary structure comprises 55 residues: Large ribosomal subunit protein bL33 (55 aa).

The protein belongs to the bacterial ribosomal protein bL33 family.

The sequence is that of Large ribosomal subunit protein bL33 from Methylobacterium radiotolerans (strain ATCC 27329 / DSM 1819 / JCM 2831 / NBRC 15690 / NCIMB 10815 / 0-1).